Reading from the N-terminus, the 429-residue chain is Guanine nucleotide-binding protein subunit alpha (429 aa).

G2 carries the N-myristoyl glycine lipid modification. C3 is lipidated: S-palmitoyl cysteine. The G-alpha domain occupies 40–429; sequence KGVKLLLLGA…QQNLKKSGIM (390 aa). Residues 43 to 56 form a G1 motif region; sequence KLLLLGAGESGKST. GTP-binding residues include E51, S52, G53, K54, S55, and T56. Residue S55 participates in Mg(2+) binding. The segment at 125–197 is not present in other G-proteins; that stretch reads LKQIDADVAG…KDSEQFTRLS (73 aa). The interval 249–257 is G2 motif; it reads DILKGRIKT. GTP is bound by residues L251, T257, G279, N345, K346, D348, and A401. Position 257 (T257) interacts with Mg(2+). Residues 272-281 are G3 motif; the sequence is FKVLDAGGQR. Residues 341–348 form a G4 motif region; the sequence is ILFLNKID. The segment at 399–404 is G5 motif; the sequence is TCATDS.

It belongs to the G-alpha family. G(q) subfamily. G proteins are composed of 3 units; alpha, beta and gamma. The alpha chain contains the guanine nucleotide binding site. It depends on Mg(2+) as a cofactor.

Guanine nucleotide-binding proteins (G proteins) are involved as modulators or transducers in various transmembrane signaling systems. Involved in the mating pathway. The sequence is that of Guanine nucleotide-binding protein subunit alpha (CAG1) from Candida albicans (strain WO-1) (Yeast).